The chain runs to 377 residues: tRNA(Met) cytidine acetate ligase (377 aa).

ATP-binding positions include 7–20 (ITEY…HLFH), G100, N153, and R178.

It belongs to the TmcAL family.

Its subcellular location is the cytoplasm. The enzyme catalyses cytidine(34) in elongator tRNA(Met) + acetate + ATP = N(4)-acetylcytidine(34) in elongator tRNA(Met) + AMP + diphosphate. In terms of biological role, catalyzes the formation of N(4)-acetylcytidine (ac(4)C) at the wobble position of elongator tRNA(Met), using acetate and ATP as substrates. First activates an acetate ion to form acetyladenylate (Ac-AMP) and then transfers the acetyl group to tRNA to form ac(4)C34. This Staphylococcus epidermidis (strain ATCC 35984 / DSM 28319 / BCRC 17069 / CCUG 31568 / BM 3577 / RP62A) protein is tRNA(Met) cytidine acetate ligase.